The primary structure comprises 158 residues: NADH-quinone oxidoreductase subunit B (158 aa).

4 residues coordinate [4Fe-4S] cluster: cysteine 37, cysteine 38, cysteine 102, and cysteine 132.

The protein belongs to the complex I 20 kDa subunit family. As to quaternary structure, NDH-1 is composed of 14 different subunits. Subunits NuoB, C, D, E, F, and G constitute the peripheral sector of the complex. The cofactor is [4Fe-4S] cluster.

Its subcellular location is the cell inner membrane. The catalysed reaction is a quinone + NADH + 5 H(+)(in) = a quinol + NAD(+) + 4 H(+)(out). Functionally, NDH-1 shuttles electrons from NADH, via FMN and iron-sulfur (Fe-S) centers, to quinones in the respiratory chain. Couples the redox reaction to proton translocation (for every two electrons transferred, four hydrogen ions are translocated across the cytoplasmic membrane), and thus conserves the redox energy in a proton gradient. This Hydrogenovibrio crunogenus (strain DSM 25203 / XCL-2) (Thiomicrospira crunogena) protein is NADH-quinone oxidoreductase subunit B.